The chain runs to 217 residues: Choline transport system permease protein OpuBB (217 aa).

Positions threonine 19–leucine 198 constitute an ABC transmembrane type-1 domain. A run of 6 helical transmembrane segments spans residues isoleucine 23–valine 43, glycine 52–isoleucine 74, alanine 84–tyrosine 101, leucine 128–tyrosine 148, isoleucine 150–isoleucine 170, and isoleucine 180–valine 200.

The protein belongs to the binding-protein-dependent transport system permease family. CysTW subfamily.

Its subcellular location is the cell membrane. Its function is as follows. Involved in a high affinity multicomponent binding-protein-dependent transport system for choline; probably responsible for the translocation of the substrate across the membrane. In Bacillus subtilis (strain 168), this protein is Choline transport system permease protein OpuBB (opuBB).